Consider the following 360-residue polypeptide: GTP 3',8-cyclase 2 (360 aa).

The 227-residue stretch at 33–259 (TFGRVANDLR…PDPAPRGSAP (227 aa)) folds into the Radical SAM core domain. A GTP-binding site is contributed by R42. [4Fe-4S] cluster is bound by residues C49 and C53. Position 55 (Y55) interacts with S-adenosyl-L-methionine. C56 contacts [4Fe-4S] cluster. R93 lines the GTP pocket. G97 provides a ligand contact to S-adenosyl-L-methionine. Residue T124 coordinates GTP. S148 contacts S-adenosyl-L-methionine. K185 is a binding site for GTP. M219 contributes to the S-adenosyl-L-methionine binding site. [4Fe-4S] cluster contacts are provided by C287 and C290. Residue 292–294 (RTR) coordinates GTP. Position 304 (C304) interacts with [4Fe-4S] cluster.

It belongs to the radical SAM superfamily. MoaA family. As to quaternary structure, monomer and homodimer. [4Fe-4S] cluster serves as cofactor.

It carries out the reaction GTP + AH2 + S-adenosyl-L-methionine = (8S)-3',8-cyclo-7,8-dihydroguanosine 5'-triphosphate + 5'-deoxyadenosine + L-methionine + A + H(+). Its pathway is cofactor biosynthesis; molybdopterin biosynthesis. Functionally, catalyzes the cyclization of GTP to (8S)-3',8-cyclo-7,8-dihydroguanosine 5'-triphosphate. The protein is GTP 3',8-cyclase 2 of Mycobacterium bovis (strain ATCC BAA-935 / AF2122/97).